The following is a 259-amino-acid chain: Protein FAM220A (259 aa).

In terms of assembly, interacts with transcriptional activator STAT3; the interaction occurs in both the nucleus and the cytoplasm, is enhanced by IL6 and promotes STAT3 dephosphorylation, leading to negative regulation of STAT3 transcriptional activator activity. Can interact with both unphosphorylated and phosphorylated STAT3 but interacts preferentially with phosphorylated STAT3 in the nucleus. Interacts with protein phosphatase PTPN2/TC45; this promotes interaction of PTPN2 with STAT3, leading to dephosphorylation of STAT3 by PTPN2.

The protein localises to the nucleus. It localises to the cytoplasm. It is found in the cytoplasmic vesicle. Its subcellular location is the secretory vesicle. The protein resides in the acrosome. Promotes dephosphorylation of transcriptional activator STAT3 by interacting with both STAT3 and protein phosphatase PTPN2. This promotes interaction of PTPN2 with STAT3 and mediates STAT3 dephosphorylation by PTPN2, leading to negative regulation of STAT3 transcriptional activator activity. May be required for spermiogenesis or sperm function. This is Protein FAM220A (FAM220A) from Macaca fascicularis (Crab-eating macaque).